A 369-amino-acid polypeptide reads, in one-letter code: uncharacterized protein (369 aa).

This sequence belongs to the Gfo/Idh/MocA family.

This is an uncharacterized protein from Schizosaccharomyces pombe (strain 972 / ATCC 24843) (Fission yeast).